The following is a 98-amino-acid chain: Keratin, high sulfur matrix protein, IIIB4 (98 aa).

Residue Ala1 is modified to N-acetylalanine.

The protein belongs to the KRTAP type 3 family. As to quaternary structure, interacts with wool keratins. In terms of tissue distribution, wool.

In the wool cortex, wool keratin intermediate filaments are embedded in an interfilamentous matrix, consisting of hair keratin-associated proteins (KRTAP), which are essential for the formation of a rigid and resistant wool shaft through their extensive disulfide bond cross-linking with abundant cysteine residues of wool keratins. The matrix proteins include the high-sulfur and high-glycine-tyrosine keratins. This is Keratin, high sulfur matrix protein, IIIB4 from Ovis aries (Sheep).